The primary structure comprises 364 residues: Oxidized low-density lipoprotein receptor 1 (364 aa).

A disordered region spans residues 1–21 (MAFDDKMKPVNGQPDQKSCGK). Residues 1–31 (MAFDDKMKPVNGQPDQKSCGKKPKGLHLLSS) lie on the Cytoplasmic side of the membrane. Residues 32–54 (TWWCPAAVTLAILCLVLSVTLIV) form a helical; Signal-anchor for type II membrane protein membrane-spanning segment. S-palmitoyl cysteine attachment occurs at residues C35 and C45. The neck stretch occupies residues 55–242 (QQTQLLQVSD…GPCPQDWIWH (188 aa)). Over 55 to 364 (QQTQLLQVSD…QKKANLLLTQ (310 aa)) the chain is Extracellular. 3 N-linked (GlcNAc...) asparagine glycosylation sites follow: N72, N92, and N138. The stretch at 83–233 (QMSAQKKAEN…ALQRAANSSG (151 aa)) forms a coiled coil. 3 consecutive repeat copies span residues 96-141 (ESKR…NASE), 142-187 (ESKW…KYSE), and 188-233 (ESQR…NSSG). 3 cysteine pairs are disulfide-bonded: C235–C246, C262–C354, and C333–C346. The C-type lectin domain maps to 242-355 (HKENCYLFHG…CILTAFSICQ (114 aa)).

As to quaternary structure, homodimer; disulfide-linked. May form a hexamer composed of 3 homodimers. Interacts with HSP70. Post-translationally, N-glycosylated. Predominantly expressed in lung and at lower level in kidney. Expressed in macrophages but not in vascular smooth muscle cells.

It localises to the cell membrane. Its subcellular location is the membrane raft. It is found in the secreted. Receptor that mediates the recognition, internalization and degradation of oxidatively modified low density lipoprotein (oxLDL) by vascular endothelial cells. OxLDL is a marker of atherosclerosis that induces vascular endothelial cell activation and dysfunction, resulting in pro-inflammatory responses, pro-oxidative conditions and apoptosis. Its association with oxLDL induces the activation of NF-kappa-B through an increased production of intracellular reactive oxygen and a variety of pro-atherogenic cellular responses including a reduction of nitric oxide (NO) release, monocyte adhesion and apoptosis. In addition to binding oxLDL, it acts as a receptor for the HSP70 protein involved in antigen cross-presentation to naive T-cells in dendritic cells, thereby participating in cell-mediated antigen cross-presentation. Also involved in inflammatory process, by acting as a leukocyte-adhesion molecule at the vascular interface in endotoxin-induced inflammation. Also acts as a receptor for advanced glycation end (AGE) products, activated platelets, monocytes, apoptotic cells and both Gram-negative and Gram-positive bacteria. The protein is Oxidized low-density lipoprotein receptor 1 (Olr1) of Rattus norvegicus (Rat).